The primary structure comprises 134 residues: Profilin-1 (134 aa).

Cys13 and Cys118 are joined by a disulfide. An Involved in PIP2 interaction motif is present at residues 84 to 100; it reads AVIRGKKGSGGITIKKT. Thr114 carries the phosphothreonine modification.

It belongs to the profilin family. As to quaternary structure, occurs in many kinds of cells as a complex with monomeric actin in a 1:1 ratio. In terms of processing, phosphorylated by MAP kinases.

It localises to the cytoplasm. The protein resides in the cytoskeleton. Binds to actin and affects the structure of the cytoskeleton. At high concentrations, profilin prevents the polymerization of actin, whereas it enhances it at low concentrations. By binding to PIP2, it inhibits the formation of IP3 and DG. This Olea europaea (Common olive) protein is Profilin-1 (PRO1).